Reading from the N-terminus, the 1096-residue chain is Cohesin subunit scc-3 (1096 aa).

Residues 1–21 are compositionally biased toward polar residues; it reads MSETPTDQSPQRMSTRNQARV. Disordered stretches follow at residues 1-53 and 67-106; these read MSET…KKRA and NLNN…ESAE. Residues 261-312 are a coiled coil; that stretch reads IELTQSKEKTSKQIEAEKAKLKNNSAGNEKYEALVAQRTQTEERAEEIRQII. The 86-residue stretch at 320–405 folds into the SCD domain; that stretch reads FVHRYRDVVP…NKFKDRLVSM (86 aa). Positions 1057-1096 are disordered; sequence DNMSVRSGMTVTSNATMRSTASSTRGRGRGRGRSRIADDF. Polar residues predominate over residues 1060–1073; that stretch reads SVRSGMTVTSNATM.

It belongs to the SCC3 family. In terms of assembly, component of the cohesin complex, composed of the smc-1 and smc-3 heterodimer attached via their hinge domain, scc-1 which links them, and scc-3. Interacts with scc-1, smc-1 and tim-1. As to expression, expressed in gonadal cells.

The protein resides in the nucleus. It localises to the chromosome. Functionally, component of the cohesin complex, a complex required for the cohesion of sister chromatids after DNA replication. The cohesin complex apparently forms a large proteinaceous ring within which sister chromatids can be trapped. At anaphase, the scc-1 subunit of the complex is cleaved and dissociates from chromatin, allowing sister chromatids to segregate. The cohesin complex may also play a role in spindle pole assembly during mitosis. Plays an essential role in cell division during embryonic development. Required for the assembly of the synaptonemal complex between homologous chromosomes to promote sister chromatid cohesion during mitosis and meiosis. Has a role in stabilization of homologous chromosome associations during meiotic synapsis. Required for chromosome segregation during mitosis and meiosis. Plays a role in DNA double-strand break (DSB) repair during meiotic recombination and promotes the assembly of the 9-1-1 cell-cycle checkpoint response complex which is required for inducing apoptosis in response to DNA damage, at DNA damage sites. This Caenorhabditis elegans protein is Cohesin subunit scc-3.